The primary structure comprises 352 residues: Protein RecA (352 aa).

67 to 74 (GPESSGKT) contacts ATP. Residues 333 to 352 (DSTPDFAVDGNDAEETEQDF) form a disordered region. Positions 343–352 (NDAEETEQDF) are enriched in acidic residues.

Belongs to the RecA family.

The protein resides in the cytoplasm. Functionally, can catalyze the hydrolysis of ATP in the presence of single-stranded DNA, the ATP-dependent uptake of single-stranded DNA by duplex DNA, and the ATP-dependent hybridization of homologous single-stranded DNAs. It interacts with LexA causing its activation and leading to its autocatalytic cleavage. The chain is Protein RecA from Klebsiella pneumoniae (strain 342).